The primary structure comprises 668 residues: DNA mismatch repair protein MutL (668 aa).

Positions 437–459 (TYQSQYSETGSHSQETLPLSEQK) are disordered. Polar residues predominate over residues 438-459 (YQSQYSETGSHSQETLPLSEQK).

It belongs to the DNA mismatch repair MutL/HexB family.

Functionally, this protein is involved in the repair of mismatches in DNA. It is required for dam-dependent methyl-directed DNA mismatch repair. May act as a 'molecular matchmaker', a protein that promotes the formation of a stable complex between two or more DNA-binding proteins in an ATP-dependent manner without itself being part of a final effector complex. This Leuconostoc citreum (strain KM20) protein is DNA mismatch repair protein MutL.